Consider the following 398-residue polypeptide: Protein CDKN2AIP homolog A (398 aa).

The XRN2-binding (XTBD) domain maps to 19-124 (LELVHGECES…KVKKRGISSS (106 aa)). The tract at residues 118–245 (KRGISSSNEG…SDNALKPTRR (128 aa)) is disordered. Over residues 131 to 147 (EPCKKQKSSDHGERESS) the composition is skewed to basic and acidic residues. 3 stretches are compositionally biased toward polar residues: residues 154–163 (SDGNVPSTSL), 189–199 (RRSLPVSNAKS), and 226–238 (QTSM…SSDN).

It belongs to the CARF family.

The protein localises to the nucleus. The protein resides in the nucleoplasm. Its function is as follows. May regulate DNA damage response and cell proliferation. This is Protein CDKN2AIP homolog A (cdkn2aip-a) from Xenopus laevis (African clawed frog).